We begin with the raw amino-acid sequence, 422 residues long: 5-methylthioadenosine/S-adenosylhomocysteine deaminase 1 (422 aa).

Residues H56 and H58 each contribute to the Zn(2+) site. Positions 85 and 174 each coordinate substrate. H201 lines the Zn(2+) pocket. Substrate is bound by residues E204 and D290. D290 contributes to the Zn(2+) binding site.

Belongs to the metallo-dependent hydrolases superfamily. MTA/SAH deaminase family. It depends on Zn(2+) as a cofactor.

The enzyme catalyses S-adenosyl-L-homocysteine + H2O + H(+) = S-inosyl-L-homocysteine + NH4(+). It carries out the reaction S-methyl-5'-thioadenosine + H2O + H(+) = S-methyl-5'-thioinosine + NH4(+). Catalyzes the deamination of 5-methylthioadenosine and S-adenosyl-L-homocysteine into 5-methylthioinosine and S-inosyl-L-homocysteine, respectively. Is also able to deaminate adenosine. The chain is 5-methylthioadenosine/S-adenosylhomocysteine deaminase 1 from Archaeoglobus fulgidus (strain ATCC 49558 / DSM 4304 / JCM 9628 / NBRC 100126 / VC-16).